Reading from the N-terminus, the 253-residue chain is Imidazole glycerol phosphate synthase subunit HisF (253 aa).

Catalysis depends on residues Asp-11 and Asp-130.

Belongs to the HisA/HisF family. Heterodimer of HisH and HisF.

The protein localises to the cytoplasm. It carries out the reaction 5-[(5-phospho-1-deoxy-D-ribulos-1-ylimino)methylamino]-1-(5-phospho-beta-D-ribosyl)imidazole-4-carboxamide + L-glutamine = D-erythro-1-(imidazol-4-yl)glycerol 3-phosphate + 5-amino-1-(5-phospho-beta-D-ribosyl)imidazole-4-carboxamide + L-glutamate + H(+). Its pathway is amino-acid biosynthesis; L-histidine biosynthesis; L-histidine from 5-phospho-alpha-D-ribose 1-diphosphate: step 5/9. Its function is as follows. IGPS catalyzes the conversion of PRFAR and glutamine to IGP, AICAR and glutamate. The HisF subunit catalyzes the cyclization activity that produces IGP and AICAR from PRFAR using the ammonia provided by the HisH subunit. The polypeptide is Imidazole glycerol phosphate synthase subunit HisF (Paracoccus denitrificans (strain Pd 1222)).